The sequence spans 362 residues: Methylthioribose-1-phosphate isomerase (362 aa).

Residues 53–55 (RGA), Arg90, and Gln201 each bind substrate. Asp242 acts as the Proton donor in catalysis. 252–253 (NK) contributes to the substrate binding site.

This sequence belongs to the eIF-2B alpha/beta/delta subunits family. MtnA subfamily.

The catalysed reaction is 5-(methylsulfanyl)-alpha-D-ribose 1-phosphate = 5-(methylsulfanyl)-D-ribulose 1-phosphate. The protein operates within amino-acid biosynthesis; L-methionine biosynthesis via salvage pathway; L-methionine from S-methyl-5-thio-alpha-D-ribose 1-phosphate: step 1/6. Its function is as follows. Catalyzes the interconversion of methylthioribose-1-phosphate (MTR-1-P) into methylthioribulose-1-phosphate (MTRu-1-P). The chain is Methylthioribose-1-phosphate isomerase from Paramagnetospirillum magneticum (strain ATCC 700264 / AMB-1) (Magnetospirillum magneticum).